Here is a 1353-residue protein sequence, read N- to C-terminus: Xanthine dehydrogenase 2 (1353 aa).

Positions Met7 to Val93 constitute a 2Fe-2S ferredoxin-type domain. Residues Cys45, Cys50, Cys53, Cys75, Cys115, Cys118, Cys151, and Cys153 each contribute to the [2Fe-2S] cluster site. The FAD-binding PCMH-type domain occupies Gly249–Pro434. FAD contacts are provided by residues Leu277–Val284, Phe357, Cys367–Asn371, Asp380, Leu424, and Lys442. Mo-molybdopterin-binding residues include Gln788 and Phe819. Substrate contacts are provided by Glu823 and Arg901. Position 933 (Arg933) interacts with Mo-molybdopterin. Substrate contacts are provided by Phe935 and Thr1031. Ala1100 contributes to the Mo-molybdopterin binding site. Glu1289 functions as the Proton acceptor in the catalytic mechanism.

It belongs to the xanthine dehydrogenase family. Homodimer. [2Fe-2S] cluster serves as cofactor. The cofactor is FAD. Requires Mo-molybdopterin as cofactor. Expressed in roots, leaves, stems, flowers and siliques.

It carries out the reaction xanthine + NAD(+) + H2O = urate + NADH + H(+). It catalyses the reaction hypoxanthine + NAD(+) + H2O = xanthine + NADH + H(+). Its function is as follows. Key enzyme involved in purine catabolism. Catalyzes the oxidation of hypoxanthine to xanthine and the oxidation of xanthine to urate. Regulates the level of ureides and plays a role during plant growth and development and senescence. In Arabidopsis thaliana (Mouse-ear cress), this protein is Xanthine dehydrogenase 2 (XDH2).